A 95-amino-acid polypeptide reads, in one-letter code: uncharacterized protein (95 aa).

Lys-21 is a phosphate binding site. Residue Asp-44 participates in Mg(2+) binding. A phosphate-binding site is contributed by Asn-47.

It belongs to the HAD-like hydrolase superfamily. Cof family. The cofactor is Mg(2+).

This is an uncharacterized protein from Geobacillus stearothermophilus (Bacillus stearothermophilus).